Consider the following 1252-residue polypeptide: DNA-directed RNA polymerase subunit beta (1252 aa).

This sequence belongs to the RNA polymerase beta chain family. The RNAP catalytic core consists of 2 alpha, 1 beta, 1 beta' and 1 omega subunit. When a sigma factor is associated with the core the holoenzyme is formed, which can initiate transcription.

It carries out the reaction RNA(n) + a ribonucleoside 5'-triphosphate = RNA(n+1) + diphosphate. DNA-dependent RNA polymerase catalyzes the transcription of DNA into RNA using the four ribonucleoside triphosphates as substrates. The protein is DNA-directed RNA polymerase subunit beta of Chlamydia abortus (strain DSM 27085 / S26/3) (Chlamydophila abortus).